We begin with the raw amino-acid sequence, 198 residues long: MAVADPIARLVKELAKLPGIGEKTAQRLAFHILKAGAGYAGDLAAAIAGVVRDVRLCSTCQTLTDQDPCAICRDPERDARMICVVEGVPDLLAVERTHEFRGRYHVLHGALSPLDGVGPSDLKIRELLVRLEREPADEIVVATNPDVEGEATALYLTKLLKPMGLKVTRIAQGVPMGGDLEYADQVTLARALAGRREL.

The segment at 57–72 adopts a C4-type zinc-finger fold; the sequence is CSTCQTLTDQDPCAIC. One can recognise a Toprim domain in the interval 80-175; it reads RMICVVEGVP…KVTRIAQGVP (96 aa).

The protein belongs to the RecR family.

Its function is as follows. May play a role in DNA repair. It seems to be involved in an RecBC-independent recombinational process of DNA repair. It may act with RecF and RecO. In Anaeromyxobacter dehalogenans (strain 2CP-C), this protein is Recombination protein RecR.